Reading from the N-terminus, the 165-residue chain is Phosphopantetheine adenylyltransferase (165 aa).

Ser10 lines the substrate pocket. Residues 10–11 (SF) and His18 contribute to the ATP site. Residues Lys42, Ser79, and Arg93 each contribute to the substrate site. ATP-binding positions include 94–96 (GLR), Glu104, and 129–135 (VRPITAT).

It belongs to the bacterial CoaD family. As to quaternary structure, homohexamer. Mg(2+) serves as cofactor.

It localises to the cytoplasm. The catalysed reaction is (R)-4'-phosphopantetheine + ATP + H(+) = 3'-dephospho-CoA + diphosphate. The protein operates within cofactor biosynthesis; coenzyme A biosynthesis; CoA from (R)-pantothenate: step 4/5. Reversibly transfers an adenylyl group from ATP to 4'-phosphopantetheine, yielding dephospho-CoA (dPCoA) and pyrophosphate. The sequence is that of Phosphopantetheine adenylyltransferase from Bradyrhizobium diazoefficiens (strain JCM 10833 / BCRC 13528 / IAM 13628 / NBRC 14792 / USDA 110).